Here is a 63-residue protein sequence, read N- to C-terminus: Translational regulator CsrA (63 aa).

Belongs to the CsrA/RsmA family. In terms of assembly, homodimer; the beta-strands of each monomer intercalate to form a hydrophobic core, while the alpha-helices form wings that extend away from the core.

It is found in the cytoplasm. Functionally, a key translational regulator that binds mRNA to regulate translation initiation and/or mRNA stability. Mediates global changes in gene expression, shifting from rapid growth to stress survival by linking envelope stress, the stringent response and the catabolite repression systems. Usually binds in the 5'-UTR; binding at or near the Shine-Dalgarno sequence prevents ribosome-binding, repressing translation, binding elsewhere in the 5'-UTR can activate translation and/or stabilize the mRNA. Its function is antagonized by small RNA(s). In Haemophilus influenzae (strain 86-028NP), this protein is Translational regulator CsrA.